The following is a 406-amino-acid chain: CRISP/Allergen/PR-1 (406 aa).

The N-terminal stretch at 1 to 18 is a signal peptide; that stretch reads MHFQVILMMMWLWLEAEG. Asn-39 carries an N-linked (GlcNAc...) asparagine glycan. The SCP domain occupies 58–205; it reads LREHNKLRSR…TFKDLYTCNY (148 aa).

The protein belongs to the CRISP family. Post-translationally, contains 9 disulfide bonds. In terms of tissue distribution, expressed by the venom gland.

It localises to the secreted. The chain is CRISP/Allergen/PR-1 from Trittame loki (Brush-footed trapdoor spider).